An 89-amino-acid polypeptide reads, in one-letter code: MFPKRQGIIVWLHSLKYGKQLRKFGNIHYISKRLKYAVLYCDMEQVDHVMKKLASLPFVKRVEPSYRPFLKLEFESKGEKEKDSPYPLG.

It belongs to the UPF0298 family.

It localises to the cytoplasm. The polypeptide is UPF0298 protein GK1096 (Geobacillus kaustophilus (strain HTA426)).